Consider the following 211-residue polypeptide: Large ribosomal subunit protein bL25 (211 aa).

The protein belongs to the bacterial ribosomal protein bL25 family. CTC subfamily. In terms of assembly, part of the 50S ribosomal subunit; part of the 5S rRNA/L5/L18/L25 subcomplex. Contacts the 5S rRNA. Binds to the 5S rRNA independently of L5 and L18.

Functionally, this is one of the proteins that binds to the 5S RNA in the ribosome where it forms part of the central protuberance. The protein is Large ribosomal subunit protein bL25 of Anaplasma phagocytophilum (strain HZ).